Consider the following 279-residue polypeptide: Elongation factor Ts (279 aa).

An involved in Mg(2+) ion dislocation from EF-Tu region spans residues 80–83; the sequence is TDFV.

This sequence belongs to the EF-Ts family.

It localises to the cytoplasm. Associates with the EF-Tu.GDP complex and induces the exchange of GDP to GTP. It remains bound to the aminoacyl-tRNA.EF-Tu.GTP complex up to the GTP hydrolysis stage on the ribosome. This Borreliella burgdorferi (strain ZS7) (Borrelia burgdorferi) protein is Elongation factor Ts.